Reading from the N-terminus, the 102-residue chain is Glutaredoxin (102 aa).

In terms of domain architecture, Glutaredoxin spans 3–102 (MTKTKELVSS…VPLLTEAGAV (100 aa)). Cysteine 23 and cysteine 26 form a disulfide bridge.

The protein belongs to the glutaredoxin family. CPYC subfamily.

Its subcellular location is the cytoplasm. Functionally, has a glutathione-disulfide oxidoreductase activity in the presence of NADPH and glutathione reductase. Reduces low molecular weight disulfides and proteins. The polypeptide is Glutaredoxin (Ricinus communis (Castor bean)).